The sequence spans 320 residues: MARNKIALIGSGMIGGTLAHLAGLKELGDVVLFDIAEGTPQGKGLDIAESSPVDGFDAKFTGANDYAAIEGADVVIVTAGVPRKPGMSRDDLLGINLKVMEQVGAGIKKYAPEAFVICITNPLDAMVWALQKFSGLPAHKVVGMAGVLDSARFRYFLSEEFNVSVEDVTAFVLGGHGDSMVPLARYSTVAGIPLSDLVKMGWTSQDKLDKIIQRTRDGGAEIVGLLKTGSAFYAPAASAIQMAESYLKDKKRVLPVAAQLSGQYGVKDMYVGVPTVIGANGVERIIEIDLDKDEKAQFDKSVASVAGLCEACIGIAPSLK.

Residues 10–15 (GSGMIG) and aspartate 34 contribute to the NAD(+) site. Residues arginine 83 and arginine 89 each contribute to the substrate site. Residues asparagine 96 and 119–121 (ITN) each bind NAD(+). Substrate contacts are provided by asparagine 121 and arginine 152. Histidine 176 (proton acceptor) is an active-site residue.

Belongs to the LDH/MDH superfamily. MDH type 3 family.

It carries out the reaction (S)-malate + NAD(+) = oxaloacetate + NADH + H(+). Functionally, catalyzes the reversible oxidation of malate to oxaloacetate. This is Malate dehydrogenase from Brucella melitensis biotype 1 (strain ATCC 23456 / CCUG 17765 / NCTC 10094 / 16M).